The chain runs to 58 residues: Photosystem II reaction center protein K (58 aa).

Positions 1–21 (MLVISNVYPSNLFTLINPFFA) are excised as a propeptide. Residues 29 to 49 (IFDPIVDVMPIIPVFFFLLAF) form a helical membrane-spanning segment.

This sequence belongs to the PsbK family. In terms of assembly, PSII is composed of 1 copy each of membrane proteins PsbA, PsbB, PsbC, PsbD, PsbE, PsbF, PsbH, PsbI, PsbJ, PsbK, PsbL, PsbM, PsbT, PsbX, PsbY, PsbZ, Psb30/Ycf12, at least 3 peripheral proteins of the oxygen-evolving complex and a large number of cofactors. It forms dimeric complexes.

It is found in the plastid. Its subcellular location is the chloroplast thylakoid membrane. One of the components of the core complex of photosystem II (PSII). PSII is a light-driven water:plastoquinone oxidoreductase that uses light energy to abstract electrons from H(2)O, generating O(2) and a proton gradient subsequently used for ATP formation. It consists of a core antenna complex that captures photons, and an electron transfer chain that converts photonic excitation into a charge separation. In Psilotum nudum (Whisk fern), this protein is Photosystem II reaction center protein K.